The primary structure comprises 70 residues: Small ribosomal subunit protein bS21 (70 aa).

Over residues 48-61 the composition is skewed to basic residues; it reads KLAAAVKRQSKRLR. The tract at residues 48-70 is disordered; that stretch reads KLAAAVKRQSKRLRSQQLPPKMY.

It belongs to the bacterial ribosomal protein bS21 family.

In Thiobacillus denitrificans (strain ATCC 25259 / T1), this protein is Small ribosomal subunit protein bS21.